Consider the following 97-residue polypeptide: U6-theraphotoxin-Hhn1a 4 (97 aa).

Positions 1 to 33 (MLIKQFSRRSKNMKVQILLAFAALFVLAVGSYA) are cleaved as a signal peptide. Positions 34-61 (SESKKLDLRDALLSAMFSADYQLNPQER) are excised as a propeptide. 3 disulfide bridges follow: C63–C77, C70–C82, and C76–C89.

Belongs to the neurotoxin 10 (Hwtx-1) family. 12 (Hntx-12) subfamily. Expressed by the venom gland.

It is found in the secreted. In terms of biological role, ion channel inhibitor. The chain is U6-theraphotoxin-Hhn1a 4 from Cyriopagopus hainanus (Chinese bird spider).